A 599-amino-acid polypeptide reads, in one-letter code: Elongation factor 4 (599 aa).

Residues 5–187 (SHIRNFSIIA…RLVTVIPAPE (183 aa)) form the tr-type G domain. GTP is bound by residues 17 to 22 (DHGKST) and 134 to 137 (NKMD).

Belongs to the TRAFAC class translation factor GTPase superfamily. Classic translation factor GTPase family. LepA subfamily.

It is found in the cell inner membrane. The enzyme catalyses GTP + H2O = GDP + phosphate + H(+). Functionally, required for accurate and efficient protein synthesis under certain stress conditions. May act as a fidelity factor of the translation reaction, by catalyzing a one-codon backward translocation of tRNAs on improperly translocated ribosomes. Back-translocation proceeds from a post-translocation (POST) complex to a pre-translocation (PRE) complex, thus giving elongation factor G a second chance to translocate the tRNAs correctly. Binds to ribosomes in a GTP-dependent manner. The sequence is that of Elongation factor 4 from Pseudomonas paraeruginosa (strain DSM 24068 / PA7) (Pseudomonas aeruginosa (strain PA7)).